The primary structure comprises 84 residues: Three-finger toxin 3FTx-1 (84 aa).

The N-terminal stretch at 1-21 is a signal peptide; that stretch reads MKTLLLTLVVVTIVCLDLGNS. Intrachain disulfides connect Cys24–Cys41, Cys34–Cys59, Cys63–Cys71, and Cys72–Cys77. Asn78 carries N-linked (GlcNAc...) asparagine glycosylation.

It belongs to the three-finger toxin family. Short-chain subfamily. Expressed by the venom gland.

It is found in the secreted. This chain is Three-finger toxin 3FTx-1, found in Micrurus corallinus (Brazilian coral snake).